Reading from the N-terminus, the 142-residue chain is Large ribosomal subunit protein uL11 (142 aa).

This sequence belongs to the universal ribosomal protein uL11 family. As to quaternary structure, part of the ribosomal stalk of the 50S ribosomal subunit. Interacts with L10 and the large rRNA to form the base of the stalk. L10 forms an elongated spine to which L12 dimers bind in a sequential fashion forming a multimeric L10(L12)X complex. Post-translationally, one or more lysine residues are methylated.

Functionally, forms part of the ribosomal stalk which helps the ribosome interact with GTP-bound translation factors. The chain is Large ribosomal subunit protein uL11 from Nitrobacter hamburgensis (strain DSM 10229 / NCIMB 13809 / X14).